Reading from the N-terminus, the 488-residue chain is 3-octaprenyl-4-hydroxybenzoate carboxy-lyase (488 aa).

Asn172 contributes to the Mn(2+) binding site. Residues 175-177 (IYR), 189-191 (RWL), and 194-195 (RG) contribute to the prenylated FMN site. Mn(2+) is bound at residue Glu238. The active-site Proton donor is the Asp287.

It belongs to the UbiD family. In terms of assembly, homohexamer. Prenylated FMN serves as cofactor. It depends on Mn(2+) as a cofactor.

It localises to the cell membrane. It catalyses the reaction a 4-hydroxy-3-(all-trans-polyprenyl)benzoate + H(+) = a 2-(all-trans-polyprenyl)phenol + CO2. It functions in the pathway cofactor biosynthesis; ubiquinone biosynthesis. Its function is as follows. Catalyzes the decarboxylation of 3-octaprenyl-4-hydroxy benzoate to 2-octaprenylphenol, an intermediate step in ubiquinone biosynthesis. The chain is 3-octaprenyl-4-hydroxybenzoate carboxy-lyase from Pseudomonas fluorescens (strain Pf0-1).